The following is a 395-amino-acid chain: 1-deoxy-D-xylulose 5-phosphate reductoisomerase (395 aa).

Threonine 13, glycine 14, serine 15, isoleucine 16, lysine 40, and asparagine 127 together coordinate NADPH. Residue lysine 128 coordinates 1-deoxy-D-xylulose 5-phosphate. Position 129 (glutamate 129) interacts with NADPH. Mn(2+) is bound at residue aspartate 153. The 1-deoxy-D-xylulose 5-phosphate site is built by serine 154, glutamate 155, serine 184, and histidine 207. Glutamate 155 provides a ligand contact to Mn(2+). NADPH is bound at residue glycine 213. 1-deoxy-D-xylulose 5-phosphate is bound by residues serine 220, asparagine 225, lysine 226, and glutamate 229. Glutamate 229 is a Mn(2+) binding site.

This sequence belongs to the DXR family. The cofactor is Mg(2+). Mn(2+) is required as a cofactor.

The catalysed reaction is 2-C-methyl-D-erythritol 4-phosphate + NADP(+) = 1-deoxy-D-xylulose 5-phosphate + NADPH + H(+). The protein operates within isoprenoid biosynthesis; isopentenyl diphosphate biosynthesis via DXP pathway; isopentenyl diphosphate from 1-deoxy-D-xylulose 5-phosphate: step 1/6. Its function is as follows. Catalyzes the NADPH-dependent rearrangement and reduction of 1-deoxy-D-xylulose-5-phosphate (DXP) to 2-C-methyl-D-erythritol 4-phosphate (MEP). This Nitrosospira multiformis (strain ATCC 25196 / NCIMB 11849 / C 71) protein is 1-deoxy-D-xylulose 5-phosphate reductoisomerase.